Reading from the N-terminus, the 421-residue chain is UDP-N-acetylglucosamine 1-carboxyvinyltransferase (421 aa).

22 to 23 lines the phosphoenolpyruvate pocket; the sequence is KN. R92 contacts UDP-N-acetyl-alpha-D-glucosamine. C116 serves as the catalytic Proton donor. C116 carries the 2-(S-cysteinyl)pyruvic acid O-phosphothioketal modification. Residues 121–125, D308, and I330 each bind UDP-N-acetyl-alpha-D-glucosamine; that span reads RPVDQ.

Belongs to the EPSP synthase family. MurA subfamily.

It is found in the cytoplasm. The enzyme catalyses phosphoenolpyruvate + UDP-N-acetyl-alpha-D-glucosamine = UDP-N-acetyl-3-O-(1-carboxyvinyl)-alpha-D-glucosamine + phosphate. It participates in cell wall biogenesis; peptidoglycan biosynthesis. Its function is as follows. Cell wall formation. Adds enolpyruvyl to UDP-N-acetylglucosamine. This Ralstonia nicotianae (strain ATCC BAA-1114 / GMI1000) (Ralstonia solanacearum) protein is UDP-N-acetylglucosamine 1-carboxyvinyltransferase.